We begin with the raw amino-acid sequence, 151 residues long: Large ribosomal subunit protein uL22 (151 aa).

Residues 1-18 (MARINYSINADPENTSKA) show a composition bias toward polar residues. The segment at 1 to 23 (MARINYSINADPENTSKAMGSEL) is disordered.

It belongs to the universal ribosomal protein uL22 family. As to quaternary structure, part of the 50S ribosomal subunit.

In terms of biological role, this protein binds specifically to 23S rRNA. It makes multiple contacts with different domains of the 23S rRNA in the assembled 50S subunit and ribosome. The globular domain of the protein is located near the polypeptide exit tunnel on the outside of the subunit, while an extended beta-hairpin is found that lines the wall of the exit tunnel in the center of the 70S ribosome. The sequence is that of Large ribosomal subunit protein uL22 from Methanosarcina mazei (strain ATCC BAA-159 / DSM 3647 / Goe1 / Go1 / JCM 11833 / OCM 88) (Methanosarcina frisia).